A 530-amino-acid chain; its full sequence is Asc-type amino acid transporter 1 (530 aa).

The interval 1 to 36 (MRRDSDMASHIQQPGGHGNPGPAPSPSPGPGPGPGA) is disordered. The segment covering 21–33 (GPAPSPSPGPGPG) has biased composition (pro residues). The next 10 helical transmembrane spans lie at 46–66 (IGLV…GIFI), 78–98 (VGLA…GSLC), 119–139 (IFGG…MYPT), 192–212 (IQVI…TVGF), 274–294 (AIFI…VAYF), 316–336 (LLGY…FGGI), 368–388 (CTPI…MLVG), 394–414 (INYV…GLLV), 430–450 (LLVP…SFIS), and 454–474 (VCGV…LGVF). The tract at residues 508-530 (EEENGPMGQPSPLPITDKPLKTQ) is disordered.

It belongs to the amino acid-polyamine-organocation (APC) superfamily. In terms of assembly, disulfide-linked heterodimer with the amino acid transport protein SLC3A2/4F2hc.

It is found in the cell membrane. The enzyme catalyses L-alanine(in) + glycine(out) = L-alanine(out) + glycine(in). The catalysed reaction is L-serine(out) + L-alanine(in) = L-serine(in) + L-alanine(out). It catalyses the reaction L-threonine(out) + L-alanine(in) = L-threonine(in) + L-alanine(out). It carries out the reaction L-cysteine(out) + L-alanine(in) = L-cysteine(in) + L-alanine(out). The enzyme catalyses 2-aminoisobutanoate(out) + L-alanine(in) = 2-aminoisobutanoate(in) + L-alanine(out). The catalysed reaction is D-serine(out) + L-alanine(in) = D-serine(in) + L-alanine(out). It catalyses the reaction D-alanine(out) + L-alanine(in) = D-alanine(in) + L-alanine(out). It carries out the reaction L-valine(out) + L-alanine(in) = L-valine(in) + L-alanine(out). The enzyme catalyses L-methionine(out) + L-alanine(in) = L-methionine(in) + L-alanine(out). The catalysed reaction is beta-alanine(out) + L-alanine(in) = beta-alanine(in) + L-alanine(out). It catalyses the reaction D-cysteine(out) + L-alanine(in) = D-cysteine(in) + L-alanine(out). It carries out the reaction D-threonine(out) + L-alanine(in) = D-threonine(in) + L-alanine(out). The enzyme catalyses D-isoleucine(out) + D-serine(in) = D-isoleucine(in) + D-serine(out). The catalysed reaction is D-serine(in) = D-serine(out). Associates with SLC3A2/4F2hc to form a functional heterodimeric complex that translocates small neutral L- and D-amino acids across the plasma membrane. Preferentially mediates exchange transport, but can also operate via facilitated diffusion. Acts as a major transporter for glycine, L- and D-serine in the central nervous system. At the spinal cord and brainstem regulates glycine metabolism and glycinergic inhibitory neurotransmission by providing for glycine de novo synthesis from L-serine and glycine recycling from astrocytes to glycinergic motor neurons. At Schaffer collateral-CA1 synapses mediates D-serine and glycine release that modulates post-synaptic activation of NMDA receptors and excitatory glutamatergic transmission. May regulate D-serine release from mesenchymal progenitors located in developing subcutaneous adipose tissue, favoring white adipocyte over thermogenic beige adipocyte lineage commitment. This is Asc-type amino acid transporter 1 (Slc7a10) from Rattus norvegicus (Rat).